The sequence spans 354 residues: MQHTLKKSDFFYELPEHLIARYPLQNRSDSRLLVAAVESAQKVHISNKQMIDFIDFLKPEDLLVINNTRVVPARMFGHKISGGKVEVFIERLLSEQRVKAHIRASKAPLLGSQIVIGAQKVTIEDKKDGIYTVFSEMPWTKLMAQQGKMPIPPYLARDAEALDSERYQTVYAQIAGAVAAPTAGLHFDQKLLERIAAKGVKRAAITLHVGAGTFQPVRVENLNEHVMHQEWFSLSQEVVDAVAACRAQNGRVIAIGTTALRALESAAIGSGKVGVFQGDTDLFITPGYEFQVVDALFTNFHLPESTLLMLVSAFAGVNNIRRIYQHAITEQYRFFSYGDAMFLPHRLPALETLL.

It belongs to the QueA family. As to quaternary structure, monomer.

Its subcellular location is the cytoplasm. The catalysed reaction is 7-aminomethyl-7-carbaguanosine(34) in tRNA + S-adenosyl-L-methionine = epoxyqueuosine(34) in tRNA + adenine + L-methionine + 2 H(+). The protein operates within tRNA modification; tRNA-queuosine biosynthesis. Transfers and isomerizes the ribose moiety from AdoMet to the 7-aminomethyl group of 7-deazaguanine (preQ1-tRNA) to give epoxyqueuosine (oQ-tRNA). This is S-adenosylmethionine:tRNA ribosyltransferase-isomerase from Dichelobacter nodosus (strain VCS1703A).